The chain runs to 418 residues: Glutamyl-tRNA reductase (418 aa).

Substrate contacts are provided by residues 49–52, Ser107, 112–114, and Gln118; these read TCNR and EPQ. Cys50 serves as the catalytic Nucleophile. 187-192 provides a ligand contact to NADP(+); the sequence is GAGETI.

Belongs to the glutamyl-tRNA reductase family. In terms of assembly, homodimer.

It carries out the reaction (S)-4-amino-5-oxopentanoate + tRNA(Glu) + NADP(+) = L-glutamyl-tRNA(Glu) + NADPH + H(+). The protein operates within porphyrin-containing compound metabolism; protoporphyrin-IX biosynthesis; 5-aminolevulinate from L-glutamyl-tRNA(Glu): step 1/2. In terms of biological role, catalyzes the NADPH-dependent reduction of glutamyl-tRNA(Glu) to glutamate 1-semialdehyde (GSA). The chain is Glutamyl-tRNA reductase from Aeromonas salmonicida (strain A449).